A 236-amino-acid polypeptide reads, in one-letter code: MAEAEESPGDPGTASPRPLFAGLSDISISQDIPVEGEITIPMRSRIREFDSSTLNESVRNTIMRDLKAVGKKFMHVLYPRKSNTLLRDWDLWGPLILCVTLALMLQRDSADSEKDGGPQFAEVFVIVWFGAVTITLNSKLLGGNISFFQSLCVLGYCILPLTVAMLICRLVLLADPGPVNFMVRLFVVIVMFAWSIVASTAFLADSQPPNRRALAVYPVFLFYFVISWMILTFTPQ.

A2 is subject to N-acetylalanine. Over A2–T84 the chain is Cytoplasmic. S7 bears the Phosphoserine mark. The helical transmembrane segment at L85–L105 threads the bilayer. Topologically, residues Q106 to D115 are lumenal. The chain crosses the membrane as a helical span at residues G116–L136. Residues N137–S146 are Cytoplasmic-facing. Residues F147–I167 traverse the membrane as a helical segment. Residues C168–R184 lie on the Lumenal side of the membrane. Residues L185–D205 traverse the membrane as a helical segment. Topologically, residues S206–R212 are cytoplasmic. A helical membrane pass occupies residues A213–F233. Residues T234 to Q236 lie on the Lumenal side of the membrane.

It belongs to the YIP1 family. In terms of assembly, predominantly interacts with YIPF1 or YIPF2, but may also form a ternary complex with YIPF1 and YIPF2. This interaction may stabilize YIPF1 and YIPF2.

It is found in the golgi apparatus membrane. In terms of biological role, may be required for stable YIPF1 and YIPF2 protein expression. The sequence is that of Protein YIPF6 (YIPF6) from Homo sapiens (Human).